Reading from the N-terminus, the 192-residue chain is Imidazoleglycerol-phosphate dehydratase (192 aa).

Belongs to the imidazoleglycerol-phosphate dehydratase family.

The protein resides in the cytoplasm. The enzyme catalyses D-erythro-1-(imidazol-4-yl)glycerol 3-phosphate = 3-(imidazol-4-yl)-2-oxopropyl phosphate + H2O. The protein operates within amino-acid biosynthesis; L-histidine biosynthesis; L-histidine from 5-phospho-alpha-D-ribose 1-diphosphate: step 6/9. The polypeptide is Imidazoleglycerol-phosphate dehydratase (Staphylococcus aureus (strain MRSA252)).